The chain runs to 206 residues: Large ribosomal subunit protein bL25 (206 aa).

The protein belongs to the bacterial ribosomal protein bL25 family. CTC subfamily. As to quaternary structure, part of the 50S ribosomal subunit; part of the 5S rRNA/L5/L18/L25 subcomplex. Contacts the 5S rRNA. Binds to the 5S rRNA independently of L5 and L18.

Its function is as follows. This is one of the proteins that binds to the 5S RNA in the ribosome where it forms part of the central protuberance. This is Large ribosomal subunit protein bL25 from Ralstonia nicotianae (strain ATCC BAA-1114 / GMI1000) (Ralstonia solanacearum).